Here is a 393-residue protein sequence, read N- to C-terminus: MTAPATRKDLMIVNMGPHHPSMHGVLRLILTLDGEDVIDCEPILGYLHRGMEKIAENRTIIQYLPYVTRWDYLATMFTEAITVNGPERLSNIQVPKRASYIRVIMLELSRIASHLLWLGPFMADIGAQTPFFYIFRERELIYDLFEAATGMRMMHNFFRIGGVAADLPHGWIDKCLDFCNYFLTGVAEYQKLITQNPIFLERVEGIGTIRAEEALNWGLSGPMLRASGIEWDLRKIDQYECYDEFAWEVQWQKEGDSLARYLVRIGEMEESIKMIQQALEGIPGGPYENLEIRRFDRVKHPQWNDFEYRFIAKKTSPIFELSKQELYVRVEAPKGELGIFLIGDQSVFPWRWKIRPPGLINLQILPQVVKRMKLADIMTILGSIDIIMGEVDR.

The protein belongs to the complex I 49 kDa subunit family. As to quaternary structure, NDH is composed of at least 16 different subunits, 5 of which are encoded in the nucleus.

Its subcellular location is the plastid. It is found in the chloroplast thylakoid membrane. The catalysed reaction is a plastoquinone + NADH + (n+1) H(+)(in) = a plastoquinol + NAD(+) + n H(+)(out). The enzyme catalyses a plastoquinone + NADPH + (n+1) H(+)(in) = a plastoquinol + NADP(+) + n H(+)(out). Functionally, NDH shuttles electrons from NAD(P)H:plastoquinone, via FMN and iron-sulfur (Fe-S) centers, to quinones in the photosynthetic chain and possibly in a chloroplast respiratory chain. The immediate electron acceptor for the enzyme in this species is believed to be plastoquinone. Couples the redox reaction to proton translocation, and thus conserves the redox energy in a proton gradient. The polypeptide is NAD(P)H-quinone oxidoreductase subunit H, chloroplastic (Ipomoea purpurea (Common morning glory)).